The following is a 906-amino-acid chain: Protein translocase subunit SecA (906 aa).

Residues Gln86, 104 to 108 (GEGKT), and Asp499 contribute to the ATP site. The tract at residues 863–885 (PVVSRIDPKDRNPDDPTSWGRVS) is disordered. The Zn(2+) site is built by Cys890, Cys892, Cys901, and His902.

This sequence belongs to the SecA family. In terms of assembly, monomer and homodimer. Part of the essential Sec protein translocation apparatus which comprises SecA, SecYEG and auxiliary proteins SecDF-YajC and YidC. Requires Zn(2+) as cofactor.

It localises to the cell inner membrane. It is found in the cytoplasm. It carries out the reaction ATP + H2O + cellular proteinSide 1 = ADP + phosphate + cellular proteinSide 2.. Its function is as follows. Part of the Sec protein translocase complex. Interacts with the SecYEG preprotein conducting channel. Has a central role in coupling the hydrolysis of ATP to the transfer of proteins into and across the cell membrane, serving both as a receptor for the preprotein-SecB complex and as an ATP-driven molecular motor driving the stepwise translocation of polypeptide chains across the membrane. This chain is Protein translocase subunit SecA, found in Rickettsia akari (strain Hartford).